The following is a 153-amino-acid chain: NAD(P)H-quinone oxidoreductase subunit N (153 aa).

Belongs to the complex I NdhN subunit family. NDH-1 can be composed of about 15 different subunits; different subcomplexes with different compositions have been identified which probably have different functions.

The protein resides in the cellular thylakoid membrane. It carries out the reaction a plastoquinone + NADH + (n+1) H(+)(in) = a plastoquinol + NAD(+) + n H(+)(out). It catalyses the reaction a plastoquinone + NADPH + (n+1) H(+)(in) = a plastoquinol + NADP(+) + n H(+)(out). NDH-1 shuttles electrons from an unknown electron donor, via FMN and iron-sulfur (Fe-S) centers, to quinones in the respiratory and/or the photosynthetic chain. The immediate electron acceptor for the enzyme in this species is believed to be plastoquinone. Couples the redox reaction to proton translocation, and thus conserves the redox energy in a proton gradient. Cyanobacterial NDH-1 also plays a role in inorganic carbon-concentration. This is NAD(P)H-quinone oxidoreductase subunit N from Synechococcus sp. (strain WH7803).